Consider the following 1003-residue polypeptide: Putative helicase MOV-10 (1003 aa).

K148 carries the N6-acetyllysine modification. Phosphothreonine is present on residues T160 and T254. S432 carries the post-translational modification Phosphoserine. 524 to 531 is an ATP binding site; that stretch reads GPPGTGKT. Residues 645–648 carry the DEAG box motif; the sequence is DEAG. Residues 921–965 are interaction with AGO2 and APOBEC3G; sequence NPLLLGHDPDWKVFLEFCKENGGYTGCPFPAKLDLQQGQNLLQGL. Residues 968–1003 form a disordered region; the sequence is LSPSTSGLKSHDYLPQEREGEEGLSLQVEPEWRNEL. A phosphoserine mark is found at S969 and S977. Basic and acidic residues predominate over residues 976-985; sequence KSHDYLPQER.

Belongs to the DNA2/NAM7 helicase family. SDE3 subfamily. Interacts with DICER1, AGO2, TARBP2, EIF6 and RPL7A (60S ribosome subunit); they form a large RNA-induced silencing complex (RISC). Interacts with APOBEC3G in an RNA-dependent manner. Interacts with TRIM71 (via NHL repeats) in an RNA-dependent manner. Interacts with both protein products of LIRE1, ORF1p and ORF2p. Interacts with TUT4 and, to a lesser extent, TUT7; the interactions are RNA-dependent. Interacts with AGO2, TNRC6B and UPF1; the interactions are direct and RNA-dependent. Interacts with FMR1; this interaction is direct, occurs in an RNA-dependent manner on polysomes and induces association of MOV10 with RNAs. Interacts with SHFL; the interaction increases in presence of RNA. Interacts with DHX34; the interaction is-RNA independent. Interacts with RBM46. In terms of processing, ubiquitinated by the DCX(DCAF12) complex that specifically recognizes the glutamate-leucine (Glu-Leu) degron at the C-terminus, leading to its degradation.

The protein localises to the cytoplasm. Its subcellular location is the P-body. It is found in the cytoplasmic ribonucleoprotein granule. The protein resides in the stress granule. It localises to the nucleus. The enzyme catalyses ATP + H2O = ADP + phosphate + H(+). 5' to 3' RNA helicase that is involved in a number of cellular roles ranging from mRNA metabolism and translation, modulation of viral infectivity, inhibition of retrotransposition, or regulation of synaptic transmission. Plays an important role in innate antiviral immunity by promoting type I interferon production. Mechanistically, specifically uses IKKepsilon/IKBKE as the mediator kinase for IRF3 activation. Contributes to UPF1 mRNA target degradation by translocation along 3' UTRs. Required for microRNA (miRNA)-mediated gene silencing by the RNA-induced silencing complex (RISC). Required for both miRNA-mediated translational repression and miRNA-mediated cleavage of complementary mRNAs by RISC. In cooperation with FMR1, regulates miRNA-mediated translational repression by AGO2. Restricts retrotransposition of long interspersed element-1 (LINE-1) in cooperation with TUT4 and TUT7 counteracting the RNA chaperonne activity of L1RE1. Facilitates LINE-1 uridylation by TUT4 and TUT7. Required for embryonic viability and for normal central nervous system development and function. Plays two critical roles in early brain development: suppresses retroelements in the nucleus by directly inhibiting cDNA synthesis, while regulates cytoskeletal mRNAs to influence neurite outgrowth in the cytosol. May function as a messenger ribonucleoprotein (mRNP) clearance factor. The chain is Putative helicase MOV-10 (MOV10) from Bos taurus (Bovine).